A 137-amino-acid polypeptide reads, in one-letter code: Gonadotropin subunit beta-1 (137 aa).

The first 24 residues, 1–24, serve as a signal peptide directing secretion; it reads MYCTHLMTLQLVVMAMLWVTPVRA. 5 disulfides stabilise this stretch: C32/C78, C46/C93, C55/C108, C59/C110, and C113/C120. N36 carries N-linked (GlcNAc...) asparagine glycosylation.

It belongs to the glycoprotein hormones subunit beta family. In terms of assembly, heterodimer of an alpha and a beta chain.

It localises to the secreted. Its function is as follows. Involved in gametogenesis and steroidogenesis. This is Gonadotropin subunit beta-1 (cgba) from Oncorhynchus keta (Chum salmon).